Consider the following 396-residue polypeptide: 1-deoxy-D-xylulose 5-phosphate reductoisomerase (396 aa).

Threonine 10, glycine 11, serine 12, isoleucine 13, asparagine 38, and asparagine 123 together coordinate NADPH. 1-deoxy-D-xylulose 5-phosphate is bound at residue lysine 124. Glutamate 125 contributes to the NADPH binding site. Position 149 (aspartate 149) interacts with Mn(2+). The 1-deoxy-D-xylulose 5-phosphate site is built by serine 150, glutamate 151, serine 185, and histidine 208. Glutamate 151 is a binding site for Mn(2+). An NADPH-binding site is contributed by glycine 214. The 1-deoxy-D-xylulose 5-phosphate site is built by serine 221, asparagine 226, lysine 227, and glutamate 230. Glutamate 230 contributes to the Mn(2+) binding site.

It belongs to the DXR family. Requires Mg(2+) as cofactor. Mn(2+) serves as cofactor.

It catalyses the reaction 2-C-methyl-D-erythritol 4-phosphate + NADP(+) = 1-deoxy-D-xylulose 5-phosphate + NADPH + H(+). It functions in the pathway isoprenoid biosynthesis; isopentenyl diphosphate biosynthesis via DXP pathway; isopentenyl diphosphate from 1-deoxy-D-xylulose 5-phosphate: step 1/6. Catalyzes the NADPH-dependent rearrangement and reduction of 1-deoxy-D-xylulose-5-phosphate (DXP) to 2-C-methyl-D-erythritol 4-phosphate (MEP). This Shewanella pealeana (strain ATCC 700345 / ANG-SQ1) protein is 1-deoxy-D-xylulose 5-phosphate reductoisomerase.